A 212-amino-acid chain; its full sequence is Adenylate kinase (212 aa).

10-15 (GAGKGT) contacts ATP. Residues 30 to 59 (STGDMFRAAIANQTEMGVLAKSYIDKGELV) are NMP. AMP contacts are provided by residues T31, R36, 57–59 (ELV), 86–89 (GYPR), and Q93. Residues 127-159 (GRIIHRETGETFHKVFNPPADYKEEDYYQREDD) form an LID region. ATP contacts are provided by residues R128 and 137 to 138 (TF). AMP contacts are provided by R156 and R167. Q195 contacts ATP.

This sequence belongs to the adenylate kinase family. As to quaternary structure, monomer.

The protein resides in the cytoplasm. It catalyses the reaction AMP + ATP = 2 ADP. It functions in the pathway purine metabolism; AMP biosynthesis via salvage pathway; AMP from ADP: step 1/1. In terms of biological role, catalyzes the reversible transfer of the terminal phosphate group between ATP and AMP. Plays an important role in cellular energy homeostasis and in adenine nucleotide metabolism. In Streptococcus sanguinis (strain SK36), this protein is Adenylate kinase.